An 857-amino-acid chain; its full sequence is Protein STICHEL-like 2 (857 aa).

Residue 280–287 (GPRGTGKT) coordinates ATP. 4 residues coordinate Zn(2+): C299, C309, C312, and C315. Residues 544–576 (LTRHTSEEEMQKLRNALKILSDAEKHLRASKNQ) are a coiled coil. Disordered regions lie at residues 593 to 629 (SSFA…DAEK) and 787 to 845 (ASSR…SSRL). The span at 599–610 (ENGRNQINKDVE) shows a compositional bias: basic and acidic residues. Over residues 834–843 (QSETQNSKSS) the composition is skewed to polar residues.

Belongs to the DnaX/STICHEL family.

The protein is Protein STICHEL-like 2 of Arabidopsis thaliana (Mouse-ear cress).